Reading from the N-terminus, the 178-residue chain is ATP synthase subunit delta (178 aa).

Belongs to the ATPase delta chain family. As to quaternary structure, F-type ATPases have 2 components, F(1) - the catalytic core - and F(0) - the membrane proton channel. F(1) has five subunits: alpha(3), beta(3), gamma(1), delta(1), epsilon(1). F(0) has three main subunits: a(1), b(2) and c(10-14). The alpha and beta chains form an alternating ring which encloses part of the gamma chain. F(1) is attached to F(0) by a central stalk formed by the gamma and epsilon chains, while a peripheral stalk is formed by the delta and b chains.

The protein localises to the cell membrane. In terms of biological role, f(1)F(0) ATP synthase produces ATP from ADP in the presence of a proton or sodium gradient. F-type ATPases consist of two structural domains, F(1) containing the extramembraneous catalytic core and F(0) containing the membrane proton channel, linked together by a central stalk and a peripheral stalk. During catalysis, ATP synthesis in the catalytic domain of F(1) is coupled via a rotary mechanism of the central stalk subunits to proton translocation. Its function is as follows. This protein is part of the stalk that links CF(0) to CF(1). It either transmits conformational changes from CF(0) to CF(1) or is implicated in proton conduction. This Mycoplasma pneumoniae (strain ATCC 29342 / M129 / Subtype 1) (Mycoplasmoides pneumoniae) protein is ATP synthase subunit delta.